Reading from the N-terminus, the 331-residue chain is Biotin synthase (331 aa).

The 231-residue stretch at 48–278 (FDSQKFEFCS…SAELRLCGGR (231 aa)) folds into the Radical SAM core domain. Residues Cys-66, Cys-70, and Cys-73 each contribute to the [4Fe-4S] cluster site. 4 residues coordinate [2Fe-2S] cluster: Cys-110, Cys-143, Cys-203, and Arg-273.

The protein belongs to the radical SAM superfamily. Biotin synthase family. As to quaternary structure, homodimer. The cofactor is [4Fe-4S] cluster. Requires [2Fe-2S] cluster as cofactor.

The catalysed reaction is (4R,5S)-dethiobiotin + (sulfur carrier)-SH + 2 reduced [2Fe-2S]-[ferredoxin] + 2 S-adenosyl-L-methionine = (sulfur carrier)-H + biotin + 2 5'-deoxyadenosine + 2 L-methionine + 2 oxidized [2Fe-2S]-[ferredoxin]. It functions in the pathway cofactor biosynthesis; biotin biosynthesis; biotin from 7,8-diaminononanoate: step 2/2. Its function is as follows. Catalyzes the conversion of dethiobiotin (DTB) to biotin by the insertion of a sulfur atom into dethiobiotin via a radical-based mechanism. In Hydrogenobaculum sp. (strain Y04AAS1), this protein is Biotin synthase.